The chain runs to 374 residues: Nucleosome assembly protein 1;1 (374 aa).

A coiled-coil region spans residues 26–80 (VNALKNKLQDITGKPTNVLECLSPNVRKRVEVLKEIQSQHDELEAKFYEERAVLE). The Nuclear export signal signature appears at 47 to 62 (LSPNVRKRVEVLKEIQ). Positions 223–228 (KKKPKK) match the Nuclear localization signal motif. A compositionally biased stretch (acidic residues) spans 299–339 (AAEDDFADLEDDDDDDEEDDDDEDEEEEDDEDDEDEEDEDD). Residues 299–374 (AAEDDFADLE…GERPPECKQQ (76 aa)) form a disordered region. A compositionally biased stretch (basic residues) spans 343–355 (KKKSSAVRKRGVR). A Cysteine methyl ester modification is found at C371. The S-farnesyl cysteine moiety is linked to residue C371. Residues 372–374 (KQQ) constitute a propeptide, removed in mature form.

The protein belongs to the nucleosome assembly protein (NAP) family. As to quaternary structure, binds preferentially histones H4 and H1 in vitro. Interacts with CYCB1;1.

The protein resides in the nucleus. It is found in the cytoplasm. Functionally, may modulate chromatin structure by regulation of nucleosome assembly/disassembly. Could function together with B-type cyclins in the regulation of microtubule dynamics. The sequence is that of Nucleosome assembly protein 1;1 (NAP1;1) from Nicotiana tabacum (Common tobacco).